The chain runs to 262 residues: Small ribosomal subunit protein eS1 (262 aa).

The span at 1-18 (MAVGKNKRISKGKKGSKK) shows a compositional bias: basic residues. The interval 1-20 (MAVGKNKRISKGKKGSKKKT) is disordered.

Belongs to the eukaryotic ribosomal protein eS1 family. As to quaternary structure, component of the small ribosomal subunit. Mature ribosomes consist of a small (40S) and a large (60S) subunit. The 40S subunit contains about 33 different proteins and 1 molecule of RNA (18S). The 60S subunit contains about 49 different proteins and 3 molecules of RNA (25S, 5.8S and 5S).

Its subcellular location is the cytoplasm. This chain is Small ribosomal subunit protein eS1, found in Oryza sativa subsp. japonica (Rice).